A 274-amino-acid chain; its full sequence is Pantothenate synthetase (274 aa).

27–34 (MGALHQGH) is a binding site for ATP. His34 (proton donor) is an active-site residue. Position 58 (Gln58) interacts with (R)-pantoate. A beta-alanine-binding site is contributed by Gln58. 144–147 (GKKD) provides a ligand contact to ATP. Residue Gln150 participates in (R)-pantoate binding. ATP is bound by residues Ile173 and 181–184 (LSSR).

The protein belongs to the pantothenate synthetase family. In terms of assembly, homodimer.

Its subcellular location is the cytoplasm. The catalysed reaction is (R)-pantoate + beta-alanine + ATP = (R)-pantothenate + AMP + diphosphate + H(+). The protein operates within cofactor biosynthesis; (R)-pantothenate biosynthesis; (R)-pantothenate from (R)-pantoate and beta-alanine: step 1/1. Catalyzes the condensation of pantoate with beta-alanine in an ATP-dependent reaction via a pantoyl-adenylate intermediate. This chain is Pantothenate synthetase, found in Sulfurovum sp. (strain NBC37-1).